Consider the following 203-residue polypeptide: Probable proteasome subunit beta type-4 (203 aa).

The protein belongs to the peptidase T1B family. As to quaternary structure, the 26S proteasome consists of a 20S proteasome core and two 19S regulatory subunits. The 20S proteasome core is composed of 28 subunits that are arranged in four stacked rings, resulting in a barrel-shaped structure. The two end rings are each formed by seven alpha subunits, and the two central rings are each formed by seven beta subunits. The catalytic chamber with the active sites is on the inside of the barrel.

The protein resides in the cytoplasm. It is found in the nucleus. Its function is as follows. Non-catalytic component of the proteasome, a multicatalytic proteinase complex which is characterized by its ability to cleave peptides with Arg, Phe, Tyr, Leu, and Glu adjacent to the leaving group at neutral or slightly basic pH. The proteasome has an ATP-dependent proteolytic activity. This chain is Probable proteasome subunit beta type-4 (pcb-4), found in Neurospora crassa (strain ATCC 24698 / 74-OR23-1A / CBS 708.71 / DSM 1257 / FGSC 987).